The primary structure comprises 303 residues: N-acetyl-D-glucosamine kinase (303 aa).

ATP-binding positions include 4–11 and 133–140; these read GFDIGGTK and GVGGGLIF. H157, C177, C179, and C184 together coordinate Zn(2+).

Belongs to the ROK (NagC/XylR) family. NagK subfamily.

It carries out the reaction N-acetyl-D-glucosamine + ATP = N-acetyl-D-glucosamine 6-phosphate + ADP + H(+). The protein operates within cell wall biogenesis; peptidoglycan recycling. In terms of biological role, catalyzes the phosphorylation of N-acetyl-D-glucosamine (GlcNAc) derived from cell-wall degradation, yielding GlcNAc-6-P. The sequence is that of N-acetyl-D-glucosamine kinase from Escherichia coli O6:H1 (strain CFT073 / ATCC 700928 / UPEC).